Here is a 1273-residue protein sequence, read N- to C-terminus: Ribulose bisphosphate carboxylase small subunit, chloroplastic (1273 aa).

The N-terminal 134 residues, M1–D134, are a transit peptide targeting the chloroplast. 7 propeptides span residues G269 to D278, G412 to D421, G556 to D565, G699 to D708, G844 to E853, G987 to D996, and G1131 to E1140.

The protein belongs to the RuBisCO small chain family. In terms of assembly, heterohexadecamer of 8 large and 8 small subunits. In terms of processing, eight small subunits are processed from a large polyprotein. All start with the same sequence but there is more heterogeneity at the C-terminus.

Its subcellular location is the plastid. The protein localises to the chloroplast. In terms of biological role, ruBisCO catalyzes two reactions: the carboxylation of D-ribulose 1,5-bisphosphate, the primary event in carbon dioxide fixation, as well as the oxidative fragmentation of the pentose substrate. Both reactions occur simultaneously and in competition at the same active site. Although the small subunit is not catalytic it is essential for maximal activity. This Euglena gracilis protein is Ribulose bisphosphate carboxylase small subunit, chloroplastic.